We begin with the raw amino-acid sequence, 92 residues long: Small ribosomal subunit protein uS19c (92 aa).

Belongs to the universal ribosomal protein uS19 family.

The protein resides in the plastid. Its subcellular location is the chloroplast. Protein S19 forms a complex with S13 that binds strongly to the 16S ribosomal RNA. The polypeptide is Small ribosomal subunit protein uS19c (Staurastrum punctulatum (Green alga)).